The primary structure comprises 210 residues: ATP-dependent Clp protease proteolytic subunit (210 aa).

Catalysis depends on Ser-106, which acts as the Nucleophile. The active site involves His-131.

Belongs to the peptidase S14 family. As to quaternary structure, fourteen ClpP subunits assemble into 2 heptameric rings which stack back to back to give a disk-like structure with a central cavity, resembling the structure of eukaryotic proteasomes.

It is found in the cytoplasm. The catalysed reaction is Hydrolysis of proteins to small peptides in the presence of ATP and magnesium. alpha-casein is the usual test substrate. In the absence of ATP, only oligopeptides shorter than five residues are hydrolyzed (such as succinyl-Leu-Tyr-|-NHMec, and Leu-Tyr-Leu-|-Tyr-Trp, in which cleavage of the -Tyr-|-Leu- and -Tyr-|-Trp bonds also occurs).. Its function is as follows. Cleaves peptides in various proteins in a process that requires ATP hydrolysis. Has a chymotrypsin-like activity. Plays a major role in the degradation of misfolded proteins. This chain is ATP-dependent Clp protease proteolytic subunit, found in Bartonella quintana (strain Toulouse) (Rochalimaea quintana).